The chain runs to 815 residues: Phenylalanine--tRNA ligase beta subunit (815 aa).

The 110-residue stretch at 39-148 (ATELQKFEVA…EYAVVGDNFT (110 aa)) folds into the tRNA-binding domain. The region spanning 420–495 (LQKIPLDFSV…RIYGYDKIES (76 aa)) is the B5 domain. Mg(2+) is bound by residues D473, D479, E482, and E483. The 94-residue stretch at 721 to 814 (SDFQANFRDY…ISQKFQGTLR (94 aa)) folds into the FDX-ACB domain.

It belongs to the phenylalanyl-tRNA synthetase beta subunit family. Type 1 subfamily. In terms of assembly, tetramer of two alpha and two beta subunits. Mg(2+) serves as cofactor.

It localises to the cytoplasm. The enzyme catalyses tRNA(Phe) + L-phenylalanine + ATP = L-phenylalanyl-tRNA(Phe) + AMP + diphosphate + H(+). The chain is Phenylalanine--tRNA ligase beta subunit from Rickettsia typhi (strain ATCC VR-144 / Wilmington).